Reading from the N-terminus, the 128-residue chain is Large ribosomal subunit protein bL17 (128 aa).

Belongs to the bacterial ribosomal protein bL17 family. In terms of assembly, part of the 50S ribosomal subunit. Contacts protein L32.

The protein is Large ribosomal subunit protein bL17 of Edwardsiella ictaluri (strain 93-146).